The sequence spans 154 residues: MKILVLNGPNLNLLGIREPEIYGKVSLEEIEKDLTGFAENQGVEIIFYQKNGEGELIDLIHRYYREIDGILINPGAYTHYSIALRDALLAVGKPAVEVHLSNLYKREEFRQHSVTAGACIGYIAGFGVDSYRLGLIALIDYLKRRDNDGASGKA.

Tyrosine 22 (proton acceptor) is an active-site residue. Residues asparagine 73, histidine 79, and aspartate 86 each contribute to the substrate site. The active-site Proton donor is the histidine 99. Residues 100–101 (LS) and arginine 110 contribute to the substrate site.

It belongs to the type-II 3-dehydroquinase family. In terms of assembly, homododecamer.

The enzyme catalyses 3-dehydroquinate = 3-dehydroshikimate + H2O. The protein operates within metabolic intermediate biosynthesis; chorismate biosynthesis; chorismate from D-erythrose 4-phosphate and phosphoenolpyruvate: step 3/7. In terms of biological role, catalyzes a trans-dehydration via an enolate intermediate. The protein is 3-dehydroquinate dehydratase of Carboxydothermus hydrogenoformans (strain ATCC BAA-161 / DSM 6008 / Z-2901).